Consider the following 161-residue polypeptide: Phosphotransferase enzyme IIB component GlvB (161 aa).

The chain crosses the membrane as a helical span at residues 10-32 (LTQIAIGLCFTLLYFVVFRTLIL). In terms of domain architecture, PTS EIIB type-1 spans 70–152 (LDQAAGILQA…DSLINSHQSA (83 aa)). The active-site Phosphocysteine intermediate is Cys92.

Its subcellular location is the cell inner membrane. Functionally, the phosphoenolpyruvate-dependent sugar phosphotransferase system (sugar PTS), a major carbohydrate active -transport system, catalyzes the phosphorylation of incoming sugar substrates concomitantly with their translocation across the cell membrane. This operon may be cryptic in wild-type K12 strains. In Escherichia coli (strain K12), this protein is Phosphotransferase enzyme IIB component GlvB.